A 66-amino-acid polypeptide reads, in one-letter code: Large ribosomal subunit protein bL35 (66 aa).

Basic residues predominate over residues 1–16 (MPKMKTHRGAAKRVKR). The disordered stretch occupies residues 1–28 (MPKMKTHRGAAKRVKRTGSGQLKRSRAF).

This sequence belongs to the bacterial ribosomal protein bL35 family.

The polypeptide is Large ribosomal subunit protein bL35 (Staphylococcus epidermidis (strain ATCC 35984 / DSM 28319 / BCRC 17069 / CCUG 31568 / BM 3577 / RP62A)).